Reading from the N-terminus, the 311-residue chain is Coproporphyrin III ferrochelatase 1 (311 aa).

Residues tyrosine 12, arginine 29, 45-46 (RY), serine 53, and tyrosine 124 contribute to the Fe-coproporphyrin III site. Fe(2+) contacts are provided by histidine 182 and glutamate 263.

Belongs to the ferrochelatase family.

The protein resides in the cytoplasm. The catalysed reaction is Fe-coproporphyrin III + 2 H(+) = coproporphyrin III + Fe(2+). It functions in the pathway porphyrin-containing compound metabolism; protoheme biosynthesis. Involved in coproporphyrin-dependent heme b biosynthesis. Catalyzes the insertion of ferrous iron into coproporphyrin III to form Fe-coproporphyrin III. This chain is Coproporphyrin III ferrochelatase 1, found in Bacillus thuringiensis subsp. konkukian (strain 97-27).